Consider the following 150-residue polypeptide: Allograft inflammatory factor 1-like (150 aa).

Position 2 is an N-acetylserine (S2). S2 carries the phosphoserine modification. The region spanning 47–82 is the EF-hand 1 domain; that stretch reads EKLTAFKEKYMEFDLNNEGEIDLMSLKRMMEKLGVP. D60, N62, E64, and E66 together coordinate Ca(2+). The 35-residue stretch at 83-117 folds into the EF-hand 2; degenerate domain; sequence KTHLEMKKMISEVTGGVSDTISYRDFVNMMLGKRS. The tract at residues 129–150 is disordered; that stretch reads KANESSPKPVGPPPERDIASLP. S134 bears the Phosphoserine mark.

Homodimer (Potential). Monomer.

It is found in the cytoplasm. Its subcellular location is the cytoskeleton. The protein resides in the cell projection. It localises to the ruffle membrane. In terms of biological role, actin-binding protein that promotes actin bundling. May neither bind calcium nor depend on calcium for function. This Homo sapiens (Human) protein is Allograft inflammatory factor 1-like (AIF1L).